We begin with the raw amino-acid sequence, 27 residues long: Protamine-B (27 aa).

Positions 1 to 27 are disordered; it reads ARRRRRSSRPQRRRRRRRHGRRRRGRR.

As to expression, testis.

It is found in the nucleus. Its subcellular location is the chromosome. In terms of biological role, protamines substitute for histones in the chromatin of sperm during the haploid phase of spermatogenesis. They compact sperm DNA into a highly condensed, stable and inactive complex. This is Protamine-B from Acipenser stellatus (Sevruga).